A 132-amino-acid polypeptide reads, in one-letter code: Fatty acid-binding protein, intestinal (132 aa).

N-acetylalanine is present on alanine 2. Residues tryptophan 83 and arginine 107 each coordinate hexadecanoate. Tetradecanoate contacts are provided by tryptophan 83 and arginine 107.

This sequence belongs to the calycin superfamily. Fatty-acid binding protein (FABP) family. In terms of tissue distribution, expressed in the small intestine. Expression in the mucosal cells of the ileum extends from the midvillar region to the villus tips.

Its subcellular location is the cytoplasm. FABPs are thought to play a role in the intracellular transport of long-chain fatty acids and their acyl-CoA esters. FABP2 is probably involved in triglyceride-rich lipoprotein synthesis. Binds saturated long-chain fatty acids with a high affinity, but binds with a lower affinity to unsaturated long-chain fatty acids. FABP2 may also help maintain energy homeostasis by functioning as a lipid sensor. This is Fatty acid-binding protein, intestinal (Fabp2) from Rattus norvegicus (Rat).